Consider the following 469-residue polypeptide: Septin homolog spn1 (469 aa).

Positions 1 to 58 (MASMVLADGMPTVKDDSTRSRGSDVDSFTSTDNVTQINVEAAISENKNEEKPIQDNSE) are disordered. A compositionally biased stretch (basic and acidic residues) spans 13–24 (VKDDSTRSRGSD). Polar residues predominate over residues 26-38 (DSFTSTDNVTQIN). Residues 92-367 (QGFNFNVLVL…EAYRTERLLS (276 aa)) enclose the Septin-type G domain. Residues 102 to 109 (GESGSGKS) are G1 motif. GTP contacts are provided by residues 102–109 (GESGSGKS), threonine 139, glycine 165, 244–252 (KADTLTDDE), and arginine 317. The G3 motif stretch occupies residues 162-165 (DTPG). The tract at residues 243–246 (AKAD) is G4 motif. Positions 383–469 (SAKLEEERAL…NEKSKRKFFK (87 aa)) form a coiled coil.

The protein belongs to the TRAFAC class TrmE-Era-EngA-EngB-Septin-like GTPase superfamily. Septin GTPase family. In terms of assembly, component of the septin complex composed of two copies of each spn1, spn2, spn3 and spn4.

The protein localises to the cytoplasm. It is found in the cell cortex. Its function is as follows. Plays a role in the cell cycle. Involved in a late stage of septum formation leading to the separation of the daughter cells. This Schizosaccharomyces pombe (strain 972 / ATCC 24843) (Fission yeast) protein is Septin homolog spn1 (spn1).